Reading from the N-terminus, the 151-residue chain is MEGQRQESHATLTLAQAHFNNGEYAEAEALYSAYIRRCACAASSDESPGSKCSPEDLATAYNNRGQIKYFRVDFYEAMDDYTSAIEVQPNFEVPYYNRGLILYRLGYFDDALEDFKKVLDLNPGFQDATLSLKQTILDKEEKQRRNVAKNY.

3 TPR repeats span residues 8 to 41 (SHATLTLAQAHFNNGEYAEAEALYSAYIRRCACA), 58 to 91 (ATAYNNRGQIKYFRVDFYEAMDDYTSAIEVQPNF), and 92 to 125 (EVPYYNRGLILYRLGYFDDALEDFKKVLDLNPGF).

The polypeptide is Tetratricopeptide repeat protein 32 (TTC32) (Homo sapiens (Human)).